The chain runs to 500 residues: Lysine--tRNA ligase (500 aa).

Glu407 and Glu414 together coordinate Mg(2+).

This sequence belongs to the class-II aminoacyl-tRNA synthetase family. In terms of assembly, homodimer. Mg(2+) serves as cofactor.

It is found in the cytoplasm. It catalyses the reaction tRNA(Lys) + L-lysine + ATP = L-lysyl-tRNA(Lys) + AMP + diphosphate. The sequence is that of Lysine--tRNA ligase from Azobacteroides pseudotrichonymphae genomovar. CFP2.